Consider the following 270-residue polypeptide: Dehydrodolichyl diphosphate synthase (270 aa).

It belongs to the UPP synthase family.

It localises to the endoplasmic reticulum membrane. It participates in protein modification; protein glycosylation. Its function is as follows. Cis-prenyl transferase that adds multiple copies of isopentenyl pyrophosphate (IPP) to farnesyl pyrophosphate (FPP) to produce dehydrodolichyl diphosphate (Dedol-PP). This is Dehydrodolichyl diphosphate synthase (RER2) from Encephalitozoon cuniculi (strain GB-M1) (Microsporidian parasite).